Here is a 759-residue protein sequence, read N- to C-terminus: Catalase-peroxidase (759 aa).

The segment at 1–24 (MTQDKCPFKEQSSQPNFAGGGTSN) is disordered. The tryptophyl-tyrosyl-methioninium (Trp-Tyr) (with M-268) cross-link spans 96-242 (WHSAGTYRVF…LAAAHMGLIY (147 aa)). H97 acts as the Proton acceptor in catalysis. The segment at residues 242 to 268 (YVNPEGPDGNPDPVAAAHDIRDTFGRM) is a cross-link (tryptophyl-tyrosyl-methioninium (Tyr-Met) (with W-96)). H283 contributes to the heme b binding site.

Belongs to the peroxidase family. Peroxidase/catalase subfamily. In terms of assembly, homodimer or homotetramer. Heme b serves as cofactor. In terms of processing, formation of the three residue Trp-Tyr-Met cross-link is important for the catalase, but not the peroxidase activity of the enzyme.

Its subcellular location is the cytoplasm. It catalyses the reaction H2O2 + AH2 = A + 2 H2O. It carries out the reaction 2 H2O2 = O2 + 2 H2O. Functionally, bifunctional enzyme with both catalase and broad-spectrum peroxidase activity. This chain is Catalase-peroxidase, found in Aspergillus fumigatus (strain CBS 144.89 / FGSC A1163 / CEA10) (Neosartorya fumigata).